The chain runs to 141 residues: ATP synthase epsilon chain (141 aa).

Belongs to the ATPase epsilon chain family. F-type ATPases have 2 components, CF(1) - the catalytic core - and CF(0) - the membrane proton channel. CF(1) has five subunits: alpha(3), beta(3), gamma(1), delta(1), epsilon(1). CF(0) has three main subunits: a, b and c.

The protein localises to the cell inner membrane. Its function is as follows. Produces ATP from ADP in the presence of a proton gradient across the membrane. In Aromatoleum aromaticum (strain DSM 19018 / LMG 30748 / EbN1) (Azoarcus sp. (strain EbN1)), this protein is ATP synthase epsilon chain.